A 359-amino-acid polypeptide reads, in one-letter code: 3-dehydroquinate synthase (359 aa).

Residues 71–76 (DAEAAK), 105–109 (GAVTD), 129–130 (TT), Lys-142, and Lys-151 each bind NAD(+). 3 residues coordinate Zn(2+): Glu-184, His-247, and His-263.

It belongs to the sugar phosphate cyclases superfamily. Dehydroquinate synthase family. Requires NAD(+) as cofactor. Co(2+) is required as a cofactor. The cofactor is Zn(2+).

The protein localises to the cytoplasm. It catalyses the reaction 7-phospho-2-dehydro-3-deoxy-D-arabino-heptonate = 3-dehydroquinate + phosphate. The protein operates within metabolic intermediate biosynthesis; chorismate biosynthesis; chorismate from D-erythrose 4-phosphate and phosphoenolpyruvate: step 2/7. Catalyzes the conversion of 3-deoxy-D-arabino-heptulosonate 7-phosphate (DAHP) to dehydroquinate (DHQ). In Leifsonia xyli subsp. xyli (strain CTCB07), this protein is 3-dehydroquinate synthase.